Here is a 115-residue protein sequence, read N- to C-terminus: T cell receptor beta variable 7-2 (115 aa).

Residues 1–21 form the signal peptide; it reads MGTRLLFWVAFCLLGADHTGA. The region spanning 22–115 is the Ig-like domain; the sequence is GVSQSPSNKV…SAVYLCASSL (94 aa). Cys-42 and Cys-111 form a disulfide bridge.

Alpha-beta TR is a heterodimer composed of an alpha and beta chain; disulfide-linked. The alpha-beta TR is associated with the transmembrane signaling CD3 coreceptor proteins to form the TR-CD3 (TcR or TCR). The assembly of alpha-beta TR heterodimers with CD3 occurs in the endoplasmic reticulum where a single alpha-beta TR heterodimer associates with one CD3D-CD3E heterodimer, one CD3G-CD3E heterodimer and one CD247 homodimer forming a stable octameric structure. CD3D-CD3E and CD3G-CD3E heterodimers preferentially associate with TR alpha and TR beta chains, respectively. The association of the CD247 homodimer is the last step of TcR assembly in the endoplasmic reticulum and is required for transport to the cell surface.

It localises to the cell membrane. V region of the variable domain of T cell receptor (TR) beta chain that participates in the antigen recognition. Alpha-beta T cell receptors are antigen specific receptors which are essential to the immune response and are present on the cell surface of T lymphocytes. Recognize peptide-major histocompatibility (MH) (pMH) complexes that are displayed by antigen presenting cells (APC), a prerequisite for efficient T cell adaptive immunity against pathogens. Binding of alpha-beta TR to pMH complex initiates TR-CD3 clustering on the cell surface and intracellular activation of LCK that phosphorylates the ITAM motifs of CD3G, CD3D, CD3E and CD247 enabling the recruitment of ZAP70. In turn ZAP70 phosphorylates LAT, which recruits numerous signaling molecules to form the LAT signalosome. The LAT signalosome propagates signal branching to three major signaling pathways, the calcium, the mitogen-activated protein kinase (MAPK) kinase and the nuclear factor NF-kappa-B (NF-kB) pathways, leading to the mobilization of transcription factors that are critical for gene expression and essential for T cell growth and differentiation. The T cell repertoire is generated in the thymus, by V-(D)-J rearrangement. This repertoire is then shaped by intrathymic selection events to generate a peripheral T cell pool of self-MH restricted, non-autoaggressive T cells. Post-thymic interaction of alpha-beta TR with the pMH complexes shapes TR structural and functional avidity. This is T cell receptor beta variable 7-2 from Homo sapiens (Human).